The chain runs to 304 residues: L-threonate dehydrogenase (304 aa).

Residues 7-35 (YAVA…TYGV) and threonine 102 contribute to the NAD(+) site. Lysine 178 is a catalytic residue. Lysine 246 serves as a coordination point for NAD(+).

Belongs to the HIBADH-related family. L-threonate dehydrogenase subfamily.

The catalysed reaction is L-threonate + NAD(+) = 2-dehydro-L-erythronate + NADH + H(+). Functionally, catalyzes oxidation of L-threonate to 2-oxo-tetronate. Can use either NAD(+) or NADP(+) as cosubstrate, with a preference for NAD(+). This chain is L-threonate dehydrogenase, found in Pectobacterium atrosepticum (strain SCRI 1043 / ATCC BAA-672) (Erwinia carotovora subsp. atroseptica).